The sequence spans 335 residues: Protein-arginine kinase (335 aa).

The Phosphagen kinase C-terminal domain occupies 21–244; the sequence is IVMSSRIRLA…NQIIHDEKQI (224 aa). ATP contacts are provided by residues 24 to 28, His82, Arg115, 166 to 170, and 197 to 202; these read SSRIR, RASVM, and RGIYGE.

Belongs to the ATP:guanido phosphotransferase family.

It carries out the reaction L-arginyl-[protein] + ATP = N(omega)-phospho-L-arginyl-[protein] + ADP + H(+). Functionally, catalyzes the specific phosphorylation of arginine residues in proteins. This chain is Protein-arginine kinase, found in Staphylococcus aureus (strain Mu3 / ATCC 700698).